A 101-amino-acid polypeptide reads, in one-letter code: Small ribosomal subunit protein uS14 (101 aa).

Belongs to the universal ribosomal protein uS14 family. As to quaternary structure, part of the 30S ribosomal subunit. Contacts proteins S3 and S10.

Its function is as follows. Binds 16S rRNA, required for the assembly of 30S particles and may also be responsible for determining the conformation of the 16S rRNA at the A site. This is Small ribosomal subunit protein uS14 from Klebsiella pneumoniae (strain 342).